A 203-amino-acid chain; its full sequence is ATP phosphoribosyltransferase (203 aa).

Belongs to the ATP phosphoribosyltransferase family. Short subfamily.

The protein localises to the cytoplasm. It catalyses the reaction 1-(5-phospho-beta-D-ribosyl)-ATP + diphosphate = 5-phospho-alpha-D-ribose 1-diphosphate + ATP. It functions in the pathway amino-acid biosynthesis; L-histidine biosynthesis; L-histidine from 5-phospho-alpha-D-ribose 1-diphosphate: step 1/9. Functionally, catalyzes the condensation of ATP and 5-phosphoribose 1-diphosphate to form N'-(5'-phosphoribosyl)-ATP (PR-ATP). Has a crucial role in the pathway because the rate of histidine biosynthesis seems to be controlled primarily by regulation of HisG enzymatic activity. This chain is ATP phosphoribosyltransferase, found in Thermococcus kodakarensis (strain ATCC BAA-918 / JCM 12380 / KOD1) (Pyrococcus kodakaraensis (strain KOD1)).